A 1380-amino-acid polypeptide reads, in one-letter code: Mitogen-activated protein kinase kinase kinase 5 (1380 aa).

Residues 30–97 (CRRGGGAATA…GNSGSGGGRR (68 aa)) form a disordered region. A compositionally biased stretch (low complexity) spans 37 to 49 (ATAAEGEPSLQPL). The span at 50-59 (LVPPPPPPPG) shows a compositional bias: pro residues. Residues Arg-85 and Arg-87 each carry the asymmetric dimethylarginine modification. Ser-90 carries the phosphoserine; by PIM1 and PKB/AKT1 modification. The tract at residues 649–1374 (HCKRFFEMVN…MLCTLWKAII (726 aa)) is interaction with PPIA/CYPA. The region spanning 687-945 (NGDRVVLGKG…ANDLLIDEFL (259 aa)) is the Protein kinase domain. ATP contacts are provided by residues 693–701 (LGKGTYGIV) and Lys-716. Position 725 is a phosphotyrosine (Tyr-725). The Proton acceptor role is filled by Asp-810. Thr-820 is modified (phosphothreonine; by autocatalysis). Thr-845 is subject to Phosphothreonine; by autocatalysis, MELK and MAP3K6. Thr-849 is modified (phosphothreonine; by autocatalysis). Ser-965 is subject to Phosphoserine. Position 973 is a phosphoserine; by autocatalysis (Ser-973). Phosphoserine occurs at positions 1036 and 1040. The interval 1188 to 1215 (ASESDTADPEDLDVEDEHEELSSNQTVR) is disordered. Over residues 1192 to 1206 (DTADPEDLDVEDEHE) the composition is skewed to acidic residues. Residues 1252-1292 (LGRMKIETNRLLEELVRKERELQALLHQAIEEKDQEIRHLK) adopt a coiled-coil conformation.

Belongs to the protein kinase superfamily. STE Ser/Thr protein kinase family. MAP kinase kinase kinase subfamily. Homodimer when inactive. Binds both upstream activators and downstream substrates in multimolecular complexes. Part of a cytoplasmic complex made of HIPK1, DAB2IP and MAP3K5 in response to TNF. This complex formation promotes MAP3K5-JNK activation and subsequent apoptosis. Interacts with SOCS1 which recognizes phosphorylation of Tyr-725 and induces MAP3K5/ASK1 degradation in endothelial cells. Interacts with the 14-3-3 family proteins such as YWHAB, YWHAE, YWHAQ, YWHAH, YWHAZ and SFN. Interacts with ARRB2, BIRC2, DAB2IP, IGF1R, MAP3K6/ASK2, PIM1, PGAM5, SOCS1, STUB1, TRAF2 and TXN. Interacts with ERN1 in a TRAF2-dependent manner. Interacts with calcineurin subunit PPP3R1, PPP5C, PPM1L and TRAF6. Interacts (via N-terminus) with RAF1 and this interaction inhibits the proapoptotic function of MAP3K5. Interacts with DAB2IP (via N-terminus C2 domain); the interaction occurs in a TNF-alpha-dependent manner. Interacts with DUSP13A; may positively regulate apoptosis. Interacts with PPIA/CYPA. Interacts with PRMT1; the interaction results in MAP3K5 methylation by PRMT1 which inhibits MAP3K5 activation. Interacts with TRAF2; the interaction is inhibited by PRMT1. Interacts with TRIM48. The cofactor is Mg(2+). Ser-90 and Ser-1040 are inactivating phosphorylation sites, the former of which is phosphorylated by AKT1. Phosphorylated at Ser-973 which induces association of MAP3K5/ASK1 with the 14-3-3 family proteins and suppresses MAP3K5/ASK1 activity. Calcineurin (CN) dephosphorylates this site. Also dephosphorylated and activated by PGAM5. Phosphorylated at Thr-845 through autophosphorylation and by MAP3K6/ASK2 which leads to activation. Thr-845 is dephosphorylated by PPP5C. Phosphorylation at Ser-973 in response to oxidative stress is negatively regulated by PPIA/CYPA. In terms of processing, ubiquitinated. Tumor necrosis factor (TNF) induces TNFR2-dependent ubiquitination, leading to proteasomal degradation. Ubiquitinated by RC3H2 in a TRIM48-dependent manner. Post-translationally, methylation at Arg-85 and Arg-87 by PRMT1 promotes association of MAP3K5 with thioredoxin and negatively regulates MAP3K5 association with TRAF2, inhibiting MAP3K5 activation. Methylation is blocked by ubiquitination of PRMT1 by TRIM48. In terms of tissue distribution, expressed in various adult mouse tissues including heart, brain, lung, liver and kidney.

The protein resides in the cytoplasm. It localises to the endoplasmic reticulum. The catalysed reaction is L-seryl-[protein] + ATP = O-phospho-L-seryl-[protein] + ADP + H(+). It catalyses the reaction L-threonyl-[protein] + ATP = O-phospho-L-threonyl-[protein] + ADP + H(+). Activated by various stressors, including oxidative stress, endoplasmic reticulum stress, and calcium overload, as well as by receptor-mediated inflammatory signals, such as the tumor necrosis factor (TNF) and lipopolysaccharide (LPS). Homophilic association of MAP3K5/ASK1 through the C-terminal coiled-coil domains and the heteromeric complex formation of MAP3K5/ASK1 with the reduced form of thioredoxin (TXN), constitutes an inactive form of the kinase. Upon ROS-induced dissociation of TXN from MAP3K5/ASK1, TRAF2 and TRAF6 are reciprocally recruited to MAP3K5/ASK1 and form the active MAP3K5/ASK1 signalosome, in which TRAF2 and TRAF6 appear to facilitate the active configuration of MAP3K5/ASK1. MAP3K5/ASK1 activity is also regulated through several phosphorylation and dephosphorylation events. Thr-845 is an activating phosphorylation site that is autophosphorylated and phosphorylated by MAP3K6/ASK2 and dephosphorylated by PPP5C. Ser-90 and Ser-1040 are inactivating phosphorylation sites, the former of which is phosphorylated by AKT1. Phosphorylation of Ser-973 induces association of MAP3K5/ASK1 with the 14-3-3 family proteins, which suppresses MAP3K5/ASK1 activity. Calcium/calmodulin-activated protein phosphatase calcineurin (PPP3CA) has been shown to directly dephosphorylate this site. SOCS1 binds to ASK1 by recognizing phosphorylation of Tyr-725 and induces MAP3K5/ASK1 degradation in endothelial cells. Also dephosphorylated and activated by PGAM5. Contains an N-terminal autoinhibitory domain. Functionally, serine/threonine kinase which acts as an essential component of the MAP kinase signal transduction pathway. Plays an important role in the cascades of cellular responses evoked by changes in the environment. Mediates signaling for determination of cell fate such as differentiation and survival. Plays a crucial role in the apoptosis signal transduction pathway through mitochondria-dependent caspase activation. MAP3K5/ASK1 is required for the innate immune response, which is essential for host defense against a wide range of pathogens. Mediates signal transduction of various stressors like oxidative stress as well as by receptor-mediated inflammatory signals, such as the tumor necrosis factor (TNF) or lipopolysaccharide (LPS). Once activated, acts as an upstream activator of the MKK/JNK signal transduction cascade and the p38 MAPK signal transduction cascade through the phosphorylation and activation of several MAP kinase kinases like MAP2K4/SEK1, MAP2K3/MKK3, MAP2K6/MKK6 and MAP2K7/MKK7. These MAP2Ks in turn activate p38 MAPKs and c-jun N-terminal kinases (JNKs). Both p38 MAPK and JNKs control the transcription factors activator protein-1 (AP-1). This is Mitogen-activated protein kinase kinase kinase 5 (Map3k5) from Mus musculus (Mouse).